The chain runs to 240 residues: Uridylate kinase (240 aa).

9–12 (KLSG) lines the ATP pocket. G51 is a UMP binding site. 2 residues coordinate ATP: G52 and R56. Residues D71 and 132 to 139 (TGNPFFTT) each bind UMP. T159, Y165, and D168 together coordinate ATP.

This sequence belongs to the UMP kinase family. Homohexamer.

It is found in the cytoplasm. It catalyses the reaction UMP + ATP = UDP + ADP. The protein operates within pyrimidine metabolism; CTP biosynthesis via de novo pathway; UDP from UMP (UMPK route): step 1/1. Inhibited by UTP. Catalyzes the reversible phosphorylation of UMP to UDP. The chain is Uridylate kinase from Synechococcus elongatus (strain ATCC 33912 / PCC 7942 / FACHB-805) (Anacystis nidulans R2).